Reading from the N-terminus, the 164-residue chain is PTS system sorbose-specific EIIB component (164 aa).

Residues 1–164 enclose the PTS EIIB type-4 domain; the sequence is MIITLARVDD…AKIDEVFGKE (164 aa). His-14 functions as the Pros-phosphohistidine intermediate in the catalytic mechanism. His-14 bears the Phosphohistidine; by EIIA mark.

Its subcellular location is the cytoplasm. The enzyme catalyses keto-L-sorbose(out) + N(pros)-phospho-L-histidyl-[protein] = L-sorbose 1-phosphate(in) + L-histidyl-[protein]. In terms of biological role, the phosphoenolpyruvate-dependent sugar phosphotransferase system (PTS), a major carbohydrate active transport system, catalyzes the phosphorylation of incoming sugar substrates concomitant with their translocation across the cell membrane. The enzyme II SorABCD PTS system is involved in L-sorbose transport. The chain is PTS system sorbose-specific EIIB component from Lacticaseibacillus casei (Lactobacillus casei).